A 605-amino-acid polypeptide reads, in one-letter code: Elongation factor 4 (605 aa).

The 183-residue stretch at 11 to 193 (KRIRNFSIIA…RIVTQISPPK (183 aa)) folds into the tr-type G domain. GTP contacts are provided by residues 23–28 (DHGKST) and 140–143 (NKVD).

Belongs to the TRAFAC class translation factor GTPase superfamily. Classic translation factor GTPase family. LepA subfamily.

The protein resides in the cell membrane. The enzyme catalyses GTP + H2O = GDP + phosphate + H(+). In terms of biological role, required for accurate and efficient protein synthesis under certain stress conditions. May act as a fidelity factor of the translation reaction, by catalyzing a one-codon backward translocation of tRNAs on improperly translocated ribosomes. Back-translocation proceeds from a post-translocation (POST) complex to a pre-translocation (PRE) complex, thus giving elongation factor G a second chance to translocate the tRNAs correctly. Binds to ribosomes in a GTP-dependent manner. This is Elongation factor 4 from Phytoplasma australiense.